The chain runs to 107 residues: Phosphoribosyl-ATP pyrophosphatase (107 aa).

The protein belongs to the PRA-PH family.

Its subcellular location is the cytoplasm. It catalyses the reaction 1-(5-phospho-beta-D-ribosyl)-ATP + H2O = 1-(5-phospho-beta-D-ribosyl)-5'-AMP + diphosphate + H(+). Its pathway is amino-acid biosynthesis; L-histidine biosynthesis; L-histidine from 5-phospho-alpha-D-ribose 1-diphosphate: step 2/9. The chain is Phosphoribosyl-ATP pyrophosphatase from Bacillus cereus (strain Q1).